The chain runs to 159 residues: MESSSSGTTSSTIQTSSGSEESLMEQRKRKRMLSNRESARRSRMKKQKLLDDLTAQVNHLKKENTEIVTSVSITTQHYLTVEAENSVLRAQLDELNHRLQSLNDIIEFLDSSNNNNNNNMGMCSNPLVGLECDDFFVNQMNMSYIMNQPLMASSDALMY.

Residues 1-21 (MESSSSGTTSSTIQTSSGSEE) show a composition bias toward low complexity. A disordered region spans residues 1 to 47 (MESSSSGTTSSTIQTSSGSEESLMEQRKRKRMLSNRESARRSRMKKQ). Residues 25–88 (EQRKRKRMLS…LTVEAENSVL (64 aa)) form the bZIP domain. Residues 27-48 (RKRKRMLSNRESARRSRMKKQK) form a basic motif region. The interval 53–67 (LTAQVNHLKKENTEI) is leucine-zipper.

In terms of assembly, forms heterodimers with BZIP1, BZIP9, BZIP10, BZIP25 and BZIP63. Interacts with ADA2B. As to expression, highly expressed in stems and flowers. Expressed in root tips, cotyledons, leaf vasculature, embryos, apical parts of siliques and funiculi.

It localises to the nucleus. Functionally, transcription factor that binds to the DNA sequence 5'-ACTCAT-3' in target gene promoters. Promotes POX1/PRODH1 expression in response to hypoosmolarity stress. Positively regulates the expression of ASN1 and POX2/PRODH2 genes, which are involved in amino acid metabolism. Regulates several metabolic pathways such as myo-inositol, raffinose and trehalose. Regulates several trehalose metabolism genes, including TRE1, TPP5 and TPP6. Mediates recruitment of the histone acetylation machinery to activate auxin-induced transcription. Interacts with ADA2B adapter protein to promote ADA2B-mediated recruitment of SAGA-like histone acetyltransferase complexes to specific auxin-responsive genes. This Arabidopsis thaliana (Mouse-ear cress) protein is bZIP transcription factor 11.